Reading from the N-terminus, the 626-residue chain is Leucine aminopeptidase 2-1 (626 aa).

Substrate is bound by residues 134–136 and 259–264; these read QCQ and PYGGME. H288 contributes to the Zn(2+) binding site. E289 functions as the Proton acceptor in the catalytic mechanism. Zn(2+) contacts are provided by H292 and E311. The active-site Proton donor is Y389.

This sequence belongs to the peptidase M1 family. It depends on Zn(2+) as a cofactor.

It is found in the cytoplasm. The protein localises to the nucleus. The catalysed reaction is an epoxide + H2O = an ethanediol. Aminopeptidase that preferentially cleaves di- and tripeptides. Also has low epoxide hydrolase activity (in vitro). Can hydrolyze the epoxide leukotriene LTA(4) but it forms preferentially 5,6-dihydroxy-7,9,11,14-eicosatetraenoic acid rather than the cytokine leukotriene B(4) as the product compared to the homologous mammalian enzyme (in vitro). The chain is Leucine aminopeptidase 2-1 (LKA4) from Scheffersomyces stipitis (strain ATCC 58785 / CBS 6054 / NBRC 10063 / NRRL Y-11545) (Yeast).